Reading from the N-terminus, the 146-residue chain is Ribosome maturation factor RimP (146 aa).

Belongs to the RimP family.

It localises to the cytoplasm. Required for maturation of 30S ribosomal subunits. This is Ribosome maturation factor RimP from Helicobacter pylori (strain ATCC 700392 / 26695) (Campylobacter pylori).